Reading from the N-terminus, the 179-residue chain is UPF0200 protein TV0279 (179 aa).

6-13 (GMPGAGKD) is a binding site for ATP.

Belongs to the UPF0200 family.

The polypeptide is UPF0200 protein TV0279 (Thermoplasma volcanium (strain ATCC 51530 / DSM 4299 / JCM 9571 / NBRC 15438 / GSS1)).